The sequence spans 372 residues: N-methyl-L-tryptophan oxidase (372 aa).

Residue 4–34 (DLIIIGSGSVGAAAGYYATRAGLKVLMTDAH) coordinates FAD. Residue C307 is modified to S-8alpha-FAD cysteine.

The protein belongs to the MSOX/MTOX family. MTOX subfamily. In terms of assembly, monomer. The cofactor is FAD.

It catalyses the reaction N(alpha)-methyl-L-tryptophan + O2 + H2O = L-tryptophan + formaldehyde + H2O2. Catalyzes the oxidative demethylation of N-methyl-L-tryptophan. The polypeptide is N-methyl-L-tryptophan oxidase (Citrobacter koseri (strain ATCC BAA-895 / CDC 4225-83 / SGSC4696)).